The following is a 265-amino-acid chain: Glutamate racemase (265 aa).

Substrate is bound by residues 7–8 (DS) and 39–40 (YG). The Proton donor/acceptor role is filled by cysteine 70. Residue 71–72 (NT) coordinates substrate. Cysteine 179 acts as the Proton donor/acceptor in catalysis. 180–181 (TH) lines the substrate pocket.

Belongs to the aspartate/glutamate racemases family.

The catalysed reaction is L-glutamate = D-glutamate. Its pathway is cell wall biogenesis; peptidoglycan biosynthesis. Its function is as follows. Provides the (R)-glutamate required for cell wall biosynthesis. This chain is Glutamate racemase, found in Gloeobacter violaceus (strain ATCC 29082 / PCC 7421).